The primary structure comprises 249 residues: Proteasome subunit alpha (249 aa).

Residues 229–249 (EAREAEEAAEAQSSEDGGATD) form a disordered region.

It belongs to the peptidase T1A family. As to quaternary structure, the 20S proteasome core is composed of 14 alpha and 14 beta subunits that assemble into four stacked heptameric rings, resulting in a barrel-shaped structure. The two inner rings, each composed of seven catalytic beta subunits, are sandwiched by two outer rings, each composed of seven alpha subunits. The catalytic chamber with the active sites is on the inside of the barrel. Has a gated structure, the ends of the cylinder being occluded by the N-termini of the alpha-subunits. Is capped by the proteasome-associated ATPase, ARC.

Its subcellular location is the cytoplasm. It participates in protein degradation; proteasomal Pup-dependent pathway. The formation of the proteasomal ATPase ARC-20S proteasome complex, likely via the docking of the C-termini of ARC into the intersubunit pockets in the alpha-rings, may trigger opening of the gate for substrate entry. Interconversion between the open-gate and close-gate conformations leads to a dynamic regulation of the 20S proteasome proteolysis activity. In terms of biological role, component of the proteasome core, a large protease complex with broad specificity involved in protein degradation. The sequence is that of Proteasome subunit alpha from Thermobifida fusca (strain YX).